We begin with the raw amino-acid sequence, 476 residues long: Cysteine--tRNA ligase (476 aa).

C29 is a binding site for Zn(2+). The 'HIGH' region motif lies at 31–41 (PTVYDYPHLGH). The Zn(2+) site is built by C209, H234, and E238. A 'KMSKS' region motif is present at residues 266–270 (KMSKS). ATP is bound at residue K269.

The protein belongs to the class-I aminoacyl-tRNA synthetase family. Zn(2+) is required as a cofactor.

It localises to the cytoplasm. The catalysed reaction is tRNA(Cys) + L-cysteine + ATP = L-cysteinyl-tRNA(Cys) + AMP + diphosphate. This is Cysteine--tRNA ligase from Thermococcus gammatolerans (strain DSM 15229 / JCM 11827 / EJ3).